A 74-amino-acid chain; its full sequence is MSSGGLLLLLGLLTLWGVLTPVSSKDRPKKPGLCPPRPQKPCVKECKNDWSCSGQQKCCNYGCIDECRDPIFVN.

The first 24 residues, M1–S24, serve as a signal peptide directing secretion. Residues R27–I71 enclose the WAP domain. 4 disulfide bridges follow: C34–C59, C42–C63, C46–C58, and C52–C67.

Belongs to the venom waprin family. Expressed by the venom gland.

The protein localises to the secreted. Its function is as follows. Damages membranes of susceptible bacteria. Has no hemolytic activity. Not toxic to mice. Does not inhibit the proteinases elastase and cathepsin G. The protein is Auswaprin-a of Pseudechis australis (Mulga snake).